A 131-amino-acid polypeptide reads, in one-letter code: Large ribosomal subunit protein bL17 (131 aa).

The protein belongs to the bacterial ribosomal protein bL17 family. Part of the 50S ribosomal subunit. Contacts protein L32.

The chain is Large ribosomal subunit protein bL17 from Sodalis glossinidius (strain morsitans).